We begin with the raw amino-acid sequence, 94 residues long: AFELTQTPSSVEAAVGGTVTINCQASTDISSNLAWYTPKPGSPPKLLIYSASTLASGVSSRFKGSGSGVLITLTISDLECGVSFGGGTKVVVEV.

Residues 1–23 (AFELTQTPSSVEAAVGGTVTINC) are framework-1. The interval 24–34 (QASTDISSNLA) is complementarity-determining-1. The interval 35 to 49 (WYTPKPGSPPKLLIY) is framework-2. The tract at residues 50–56 (SASTLAS) is complementarity-determining-2. The framework-3 stretch occupies residues 57 to 82 (GVSSRFKGSGSGVLITLTISDLECGV). Position 83 (S83) is a region of interest, complementarity-determining-3. Residues 84 to 93 (FGGGTKVVVE) are framework-4.

This is Ig kappa-B5 chain V region 2699 from Oryctolagus cuniculus (Rabbit).